The chain runs to 990 residues: Bacteriophage adsorption protein A (990 aa).

An N-terminal signal peptide occupies residues 1–27 (MKENNLNRVIGWSGLLLTSLLSTSALA). 3 TPR repeats span residues 81–114 (IPLT…HPGD), 612–645 (ANAY…EPNN), and 646–679 (SNTQ…LPDD).

In terms of assembly, (Microbial infection) Interacts with N4 phage non-contractile sheath protein; this interaction is essential for viral adsorption to the host.

The protein resides in the cell outer membrane. Its function is as follows. (Microbial infection) Allows N4 phage attachment by binding to the viral non-contractile sheath protein. This chain is Bacteriophage adsorption protein A (nfrA), found in Escherichia coli (strain K12).